We begin with the raw amino-acid sequence, 354 residues long: Ferredoxin--NADP reductase (354 aa).

Residues aspartate 42, glutamine 50, tyrosine 55, isoleucine 95, phenylalanine 130, aspartate 299, and threonine 339 each contribute to the FAD site.

It belongs to the ferredoxin--NADP reductase type 2 family. In terms of assembly, homodimer. FAD serves as cofactor.

The catalysed reaction is 2 reduced [2Fe-2S]-[ferredoxin] + NADP(+) + H(+) = 2 oxidized [2Fe-2S]-[ferredoxin] + NADPH. In Acidovorax sp. (strain JS42), this protein is Ferredoxin--NADP reductase.